The following is a 69-amino-acid chain: U2-agatoxin-Ao1e (69 aa).

The signal sequence occupies residues 1–20 (MRAIISVLLISAMVFSIIEA). Residues 21-34 (VPLEEGLQLFEAER) constitute a propeptide that is removed on maturation. 3 disulfides stabilise this stretch: cysteine 37-cysteine 53, cysteine 44-cysteine 58, and cysteine 52-cysteine 68.

It belongs to the neurotoxin 01 (U2-agtx) family. Expressed by the venom gland.

Its subcellular location is the secreted. Insect active toxin causing rapid but reversible paralysis in crickets. No activity shown in mammals. Does not show effect on mammalian voltage-gated calcium channels. The sequence is that of U2-agatoxin-Ao1e from Agelena orientalis (Funnel-web spider).